The following is a 412-amino-acid chain: MQQLIDSLQKRGILDNSSAGLESLTAPVSAYLGFDPTAPSLHIGHWIGICFLRRLSAYGITPIALVGGATGMIGDPSGKSVERSLLDQEQVLDNSKKIEVALANYLPDIRIVNNADWLGSLSMVDFLRDIGKYFRLGSMLAKDVVKQRVYSEEGISYTEFSYLLLQSYDFAHLFKHHGVVLQCGGSDQWGNITSGIDYIRRKGLGQAFGLTYPLLTDSKGKKIGKTESGTVWLDPELTSPYELFQYFLRLSDQEIPKIARMLTLLDDDEVLALDKRLENDPQAVKRYVAEVIVKDVHGAEGLAQALATTESFFANKGKNITESELAALVQSGVGINVARADVIGKRWLDVVVQLGFCSSKGEARRLIQQRGLYVNQEPLIDEQSVLDGTYLCFDRYILLSQGKKKKQVIDLN.

An L-tyrosine-binding site is contributed by tyrosine 31. The 'HIGH' region signature appears at 36–45 (PTAPSLHIGH). Residues tyrosine 162 and glutamine 166 each contribute to the L-tyrosine site. Residues 222-226 (KIGKT) carry the 'KMSKS' region motif. Lysine 225 lines the ATP pocket. Residues 345–412 (KRWLDVVVQL…KKKKQVIDLN (68 aa)) form the S4 RNA-binding domain.

The protein belongs to the class-I aminoacyl-tRNA synthetase family. TyrS type 1 subfamily. Homodimer.

It localises to the cytoplasm. The catalysed reaction is tRNA(Tyr) + L-tyrosine + ATP = L-tyrosyl-tRNA(Tyr) + AMP + diphosphate + H(+). In terms of biological role, catalyzes the attachment of tyrosine to tRNA(Tyr) in a two-step reaction: tyrosine is first activated by ATP to form Tyr-AMP and then transferred to the acceptor end of tRNA(Tyr). The protein is Tyrosine--tRNA ligase of Chlamydia muridarum (strain MoPn / Nigg).